The chain runs to 527 residues: Peptide chain release factor 3 (527 aa).

The region spanning 9-278 is the tr-type G domain; the sequence is NKRRTFAIIS…GLTQWAPKPQ (270 aa). GTP-binding positions include 18–25, 86–90, and 140–143; these read SHPDAGKT, DTPGH, and NKLD.

This sequence belongs to the TRAFAC class translation factor GTPase superfamily. Classic translation factor GTPase family. PrfC subfamily.

It localises to the cytoplasm. In terms of biological role, increases the formation of ribosomal termination complexes and stimulates activities of RF-1 and RF-2. It binds guanine nucleotides and has strong preference for UGA stop codons. It may interact directly with the ribosome. The stimulation of RF-1 and RF-2 is significantly reduced by GTP and GDP, but not by GMP. The chain is Peptide chain release factor 3 from Haemophilus influenzae (strain PittGG).